The primary structure comprises 1316 residues: DNA-directed RNA polymerase subunit beta' (1316 aa).

Zn(2+) contacts are provided by cysteine 60, cysteine 62, cysteine 75, and cysteine 78. Mg(2+) is bound by residues aspartate 535, aspartate 537, and aspartate 539. Zn(2+)-binding residues include cysteine 891, cysteine 968, cysteine 975, and cysteine 978.

It belongs to the RNA polymerase beta' chain family. As to quaternary structure, the RNAP catalytic core consists of 2 alpha, 1 beta, 1 beta' and 1 omega subunit. When a sigma factor is associated with the core the holoenzyme is formed, which can initiate transcription. It depends on Mg(2+) as a cofactor. Zn(2+) is required as a cofactor.

The enzyme catalyses RNA(n) + a ribonucleoside 5'-triphosphate = RNA(n+1) + diphosphate. Its function is as follows. DNA-dependent RNA polymerase catalyzes the transcription of DNA into RNA using the four ribonucleoside triphosphates as substrates. This Mycobacterium bovis (strain BCG / Pasteur 1173P2) protein is DNA-directed RNA polymerase subunit beta'.